Consider the following 633-residue polypeptide: Carbon catabolite-derepressing protein kinase (633 aa).

Low complexity predominate over residues 1 to 16; the sequence is MSSNNNTNTAPANANS. The tract at residues 1-46 is disordered; sequence MSSNNNTNTAPANANSSHHHHHHHHHHHHHGHGGSNSTLNNPKSSL. Positions 17–32 are enriched in basic residues; the sequence is SHHHHHHHHHHHHHGH. In terms of domain architecture, Protein kinase spans 55 to 306; that stretch reads YQIVKTLGEG…IHEIMQDDWF (252 aa). ATP-binding positions include 61–69 and Lys-84; that span reads LGEGSFGKV. Asp-177 functions as the Proton acceptor in the catalytic mechanism. Thr-210 is modified (phosphothreonine; by autocatalysis). Residues 313–392 form an auto-inhibitory domain (AID) region; the sequence is YLLPPDLKPH…YMLIKENKSL (80 aa). The disordered stretch occupies residues 317–345; the sequence is PDLKPHPEEENENNDSKKDGSSPDNDEID. Over residues 319–337 the composition is skewed to basic and acidic residues; that stretch reads LKPHPEEENENNDSKKDGS. The region spanning 348–389 is the UBA domain; it reads LVNILSSTMGYEKDEIYESLESSEDTPAFNEIRDAYMLIKEN. The interval 409-434 is disordered; it reads FLSQSPPTFQQQSKSHQKSQVDHETA. Ser-413 is modified (phosphoserine). Residue Lys-461 forms a Glycyl lysine isopeptide (Lys-Gly) (interchain with G-Cter in ubiquitin) linkage. Ser-487 carries the post-translational modification Phosphoserine. Lys-549 is covalently cross-linked (Glycyl lysine isopeptide (Lys-Gly) (interchain with G-Cter in SUMO)). Ser-632 bears the Phosphoserine mark.

This sequence belongs to the protein kinase superfamily. CAMK Ser/Thr protein kinase family. SNF1 subfamily. As to quaternary structure, component of the AMP-activated protein kinase complex also known as the SNF1 kinase complex (Snf1c), a heterotrimeric complex composed of an alpha subunit (SNF1), a regulatory subunit beta (GAL83 and substoichiometric alternate beta subunits SIP1 and SIP2), and a regulatory subunit gamma (SNF4). Interacts with the transcriptional activator SIP4. Interacts with SAK1. Interacts with CTK1: Interacts with adenylate cyclase CYR1. In terms of processing, phosphorylation at Thr-210 in response to glucose limitation leads to activation of kinase activity. ADP, but not AMP, protects the enzyme from dephosphorylation at Thr-210 by GLC7. Sumoylation by the SUMO (E3) ligase MMS21 leads to inhibition by interaction of SUMO attached to Lys-549 with a SUMO-interacting sequence motif located near the active site of SNF1, and by targeting SNF1 for glucose-induced destruction via the SLX5-SLX8 (SUMO-directed) ubiquitin ligase.

The protein localises to the cytoplasm. The protein resides in the nucleus. It localises to the nucleus membrane. The enzyme catalyses L-seryl-[protein] + ATP = O-phospho-L-seryl-[protein] + ADP + H(+). It catalyses the reaction L-threonyl-[protein] + ATP = O-phospho-L-threonyl-[protein] + ADP + H(+). The kinase activity is positively regulated by SNF4 via sequestration of the SNF1 auto-inhibitory domain (AID). Its function is as follows. Serine/threonine protein kinase essential for release from glucose repression. Catalytic subunit of the AMP-activated protein kinase complex also known as the SNF1 kinase complex (Snf1c), a central regulator of cellular energy homeostasis, which, in response to a fall in intracellular ATP levels, activates energy-producing pathways and inhibits energy-consuming processes. The complex phosphorylates histone H3 to form H3S10ph, which promotes H3K14ac formation, leading to transcriptional activation through TBP recruitment to the promoters. The complex also negatively regulates the HOG1 MAPK pathway in ER stress response including unfolded protein response (UPR). Under nutrient/energy depletion, the complex phosphorylates and activates PAS kinase PSK1 which in turn activates PBS1, leading to the inhibition of the TORC1 signaling pathway. SNF1 also interacts and phosphorylates adenylate cyclase CYR1 and negatively regulates the protein kinase A signaling pathway. Also phosphorylates and regulates the transcriptional activator CAT8. This Saccharomyces cerevisiae (strain ATCC 204508 / S288c) (Baker's yeast) protein is Carbon catabolite-derepressing protein kinase.